The primary structure comprises 198 residues: Recombination protein RecR (198 aa).

Residues 59–74 form a C4-type zinc finger; the sequence is CSLCCNYTDHDPCPIC. The Toprim domain maps to 82 to 175; that stretch reads TLLCIVEQPR…KVTRIAHGLP (94 aa).

Belongs to the RecR family.

May play a role in DNA repair. It seems to be involved in an RecBC-independent recombinational process of DNA repair. It may act with RecF and RecO. This Desulfitobacterium hafniense (strain DSM 10664 / DCB-2) protein is Recombination protein RecR.